Consider the following 113-residue polypeptide: Large ribosomal subunit protein uL22 (113 aa).

The protein belongs to the universal ribosomal protein uL22 family. In terms of assembly, part of the 50S ribosomal subunit.

This protein binds specifically to 23S rRNA; its binding is stimulated by other ribosomal proteins, e.g. L4, L17, and L20. It is important during the early stages of 50S assembly. It makes multiple contacts with different domains of the 23S rRNA in the assembled 50S subunit and ribosome. In terms of biological role, the globular domain of the protein is located near the polypeptide exit tunnel on the outside of the subunit, while an extended beta-hairpin is found that lines the wall of the exit tunnel in the center of the 70S ribosome. This chain is Large ribosomal subunit protein uL22, found in Carboxydothermus hydrogenoformans (strain ATCC BAA-161 / DSM 6008 / Z-2901).